The chain runs to 237 residues: MRPSKRAANELRPLSFTTQFTRYAEGSVLVTLGNTKVICNASIVEGVPRFLKNSEQGWLTAEYGMLPRSTHSRMDREASRGKQGGRTVEIQRLIGRSLRAALDLKLLGPYTITIDCDVIQADGGTRTAAINGSCIAMIEALRHLQRKGILQTDPLKHKVAAVSVGIYKGVPVLDLDYAEDSNAHTDMNVVMTDNDAFIEIQGTAEGDAFHAKELDALINLARHGIKQIIEKQQEALS.

Phosphate contacts are provided by residues R86 and 124 to 126 (GTR).

It belongs to the RNase PH family. Homohexameric ring arranged as a trimer of dimers.

The enzyme catalyses tRNA(n+1) + phosphate = tRNA(n) + a ribonucleoside 5'-diphosphate. Functionally, phosphorolytic 3'-5' exoribonuclease that plays an important role in tRNA 3'-end maturation. Removes nucleotide residues following the 3'-CCA terminus of tRNAs; can also add nucleotides to the ends of RNA molecules by using nucleoside diphosphates as substrates, but this may not be physiologically important. Probably plays a role in initiation of 16S rRNA degradation (leading to ribosome degradation) during starvation. The polypeptide is Ribonuclease PH (Coxiella burnetii (strain RSA 331 / Henzerling II)).